A 142-amino-acid polypeptide reads, in one-letter code: Hemoglobin subunit alpha (142 aa).

The 141-residue stretch at 2–142 (VLSSQNKKAI…VAYELSSCYR (141 aa)) folds into the Globin domain. Residue His60 participates in O2 binding. His89 provides a ligand contact to heme b.

Belongs to the globin family. Heterotetramer of two alpha chains and two beta chains. As to expression, red blood cells.

Involved in oxygen transport from gills to the various peripheral tissues. This Hemitrygon akajei (Red stingray) protein is Hemoglobin subunit alpha (hba).